The sequence spans 117 residues: Putative membrane protein insertion efficiency factor (117 aa).

Belongs to the UPF0161 family.

It localises to the cell inner membrane. Could be involved in insertion of integral membrane proteins into the membrane. The polypeptide is Putative membrane protein insertion efficiency factor (Nitrobacter winogradskyi (strain ATCC 25391 / DSM 10237 / CIP 104748 / NCIMB 11846 / Nb-255)).